The primary structure comprises 375 residues: Leucoanthocyanidin dioxygenase 1 (375 aa).

The Fe2OG dioxygenase domain maps to 218–317; that stretch reads LLLQLKINYY…RLSWVVFCEP (100 aa). Residues His-242, Asp-244, and His-298 each contribute to the Fe cation site. Residue Arg-308 coordinates 2-oxoglutarate.

The protein belongs to the iron/ascorbate-dependent oxidoreductase family. The cofactor is L-ascorbate. Fe(2+) is required as a cofactor.

The enzyme catalyses a (2R,3S,4S)-leucoanthocyanidin + 2-oxoglutarate + O2 = a 4-H-anthocyanidin with a 3-hydroxy group + succinate + CO2 + 2 H2O. It participates in pigment biosynthesis; anthocyanin biosynthesis. In terms of biological role, involved in anthocyanin and protoanthocyanidin biosynthesis by catalyzing the oxidation of leucoanthocyanidins into anthocyanidins. In Oryza sativa subsp. japonica (Rice), this protein is Leucoanthocyanidin dioxygenase 1.